A 417-amino-acid polypeptide reads, in one-letter code: Actin-related protein 10 (417 aa).

Belongs to the actin family. In terms of assembly, subunit of dynactin, a multiprotein complex part of a tripartite complex with dynein and a adapter, such as BICDL1, BICD2 or HOOK3. The dynactin complex is built around ACTR1A/ACTB filament and consists of an actin-related filament composed of a shoulder domain, a pointed end and a barbed end. Its length is defined by its flexible shoulder domain. The soulder is composed of 2 DCTN1 subunits, 4 DCTN2 and 2 DCTN3. The 4 DCNT2 (via N-terminus) bind the ACTR1A filament and act as molecular rulers to determine the length. The pointed end is important for binding dynein-dynactin cargo adapters. Consists of 4 subunits: ACTR10, DCNT4, DCTN5 and DCTN6. The barbed end is composed of a CAPZA1:CAPZB heterodimers, which binds ACTR1A/ACTB filament and dynactin and stabilizes dynactin.

It localises to the cytoplasm. Its subcellular location is the cytoskeleton. Its function is as follows. Part of the dynactin complex that activates the molecular motor dynein for ultra-processive transport along microtubules. The polypeptide is Actin-related protein 10 (ACTR10) (Sus scrofa (Pig)).